The primary structure comprises 243 residues: 23S rRNA (guanosine-2'-O-)-methyltransferase RlmB (243 aa).

Residues Gly196, Ile216, and Leu225 each coordinate S-adenosyl-L-methionine.

This sequence belongs to the class IV-like SAM-binding methyltransferase superfamily. RNA methyltransferase TrmH family. RlmB subfamily. Homodimer.

It is found in the cytoplasm. The catalysed reaction is guanosine(2251) in 23S rRNA + S-adenosyl-L-methionine = 2'-O-methylguanosine(2251) in 23S rRNA + S-adenosyl-L-homocysteine + H(+). Functionally, specifically methylates the ribose of guanosine 2251 in 23S rRNA. The polypeptide is 23S rRNA (guanosine-2'-O-)-methyltransferase RlmB (Salmonella typhimurium (strain LT2 / SGSC1412 / ATCC 700720)).